Consider the following 239-residue polypeptide: MYYCNGENCNQTDSAKEKGHPRHLIPELCRQFYNLGWVTGTGGGISMKHGEEIYIAPSGVQKERIQPDDLFVCDIDERDISCPPPYKNLKKSQCTPLFMNAYTLRGAGAVIHTHSKSAVLATLLFPGKEFRITHQEMIKGIKKGSSGDYYRYDDLLVVPIVENTPEEKDLKDRMARAMTEYPDSCAVLVRRHGVYVWGDTWEKAKTMCECYDYLFDIAVQMKQLGLDPAAHPAEEKGIV.

A substrate-binding site is contributed by cysteine 94. Positions 112 and 114 each coordinate Zn(2+). Glutamate 136 acts as the Proton donor/acceptor in catalysis. Histidine 192 lines the Zn(2+) pocket.

Belongs to the aldolase class II family. MtnB subfamily. Zn(2+) serves as cofactor.

Its subcellular location is the cytoplasm. It catalyses the reaction 5-(methylsulfanyl)-D-ribulose 1-phosphate = 5-methylsulfanyl-2,3-dioxopentyl phosphate + H2O. The protein operates within amino-acid biosynthesis; L-methionine biosynthesis via salvage pathway; L-methionine from S-methyl-5-thio-alpha-D-ribose 1-phosphate: step 2/6. Its function is as follows. Catalyzes the dehydration of methylthioribulose-1-phosphate (MTRu-1-P) into 2,3-diketo-5-methylthiopentyl-1-phosphate (DK-MTP-1-P). Functions in the methionine salvage pathway. May play a role in apoptosis. In Aquarana catesbeiana (American bullfrog), this protein is Methylthioribulose-1-phosphate dehydratase.